Reading from the N-terminus, the 246-residue chain is Myogenic factor 5 (246 aa).

A disordered region spans residues 1-38 (RVRARIPGLSSPEGEFPEDFEPRELPPFGAPAPTEPAC). Residues 73-124 (DRRKAATMRERRRLKKVNQAFETLKRCTTANPNQRLPKVEILRNAIRYIESL) enclose the bHLH domain. Positions 210-246 (EEPGLPLRHAGSLSPGASIDSGARTPGSPPPRTYQAL) are disordered. The span at 236–246 (GSPPPRTYQAL) shows a compositional bias: pro residues.

In terms of assembly, efficient DNA binding requires dimerization with another bHLH protein.

The protein resides in the nucleus. In terms of biological role, acts as a transcriptional activator that promotes transcription of muscle-specific target genes and plays a role in muscle differentiation. Induces fibroblasts to differentiate into myoblasts. Probable sequence specific DNA-binding protein. The protein is Myogenic factor 5 (MYF5) of Coturnix japonica (Japanese quail).